Here is a 131-residue protein sequence, read N- to C-terminus: D-ribose pyranase (131 aa).

The active-site Proton donor is H20. Residues D28, H98, and 120–122 (YAN) each bind substrate.

It belongs to the RbsD / FucU family. RbsD subfamily. In terms of assembly, homodecamer.

The protein localises to the cytoplasm. It carries out the reaction beta-D-ribopyranose = beta-D-ribofuranose. The protein operates within carbohydrate metabolism; D-ribose degradation; D-ribose 5-phosphate from beta-D-ribopyranose: step 1/2. Functionally, catalyzes the interconversion of beta-pyran and beta-furan forms of D-ribose. This Bacillus mycoides (strain KBAB4) (Bacillus weihenstephanensis) protein is D-ribose pyranase.